We begin with the raw amino-acid sequence, 244 residues long: 6-carboxyhexanoate--CoA ligase (244 aa).

Belongs to the BioW family. As to quaternary structure, homodimer. Mg(2+) is required as a cofactor.

The enzyme catalyses heptanedioate + ATP + CoA = 6-carboxyhexanoyl-CoA + AMP + diphosphate. The protein operates within metabolic intermediate metabolism; pimeloyl-CoA biosynthesis; pimeloyl-CoA from pimelate: step 1/1. Functionally, catalyzes the transformation of pimelate into pimeloyl-CoA with concomitant hydrolysis of ATP to AMP. This Methanococcus maripaludis (strain C7 / ATCC BAA-1331) protein is 6-carboxyhexanoate--CoA ligase.